Here is a 379-residue protein sequence, read N- to C-terminus: UDP-N-acetylglucosamine--N-acetylmuramyl-(pentapeptide) pyrophosphoryl-undecaprenol N-acetylglucosamine transferase (379 aa).

UDP-N-acetyl-alpha-D-glucosamine is bound by residues 10–12 (TGG), N124, and R165. Residues 174–195 (TRDQGPGIRDQEKHMTDSTGPA) are disordered. UDP-N-acetyl-alpha-D-glucosamine-binding residues include S211, I266, and Q311.

This sequence belongs to the glycosyltransferase 28 family. MurG subfamily.

The protein localises to the cell inner membrane. The catalysed reaction is di-trans,octa-cis-undecaprenyl diphospho-N-acetyl-alpha-D-muramoyl-L-alanyl-D-glutamyl-meso-2,6-diaminopimeloyl-D-alanyl-D-alanine + UDP-N-acetyl-alpha-D-glucosamine = di-trans,octa-cis-undecaprenyl diphospho-[N-acetyl-alpha-D-glucosaminyl-(1-&gt;4)]-N-acetyl-alpha-D-muramoyl-L-alanyl-D-glutamyl-meso-2,6-diaminopimeloyl-D-alanyl-D-alanine + UDP + H(+). Its pathway is cell wall biogenesis; peptidoglycan biosynthesis. Its function is as follows. Cell wall formation. Catalyzes the transfer of a GlcNAc subunit on undecaprenyl-pyrophosphoryl-MurNAc-pentapeptide (lipid intermediate I) to form undecaprenyl-pyrophosphoryl-MurNAc-(pentapeptide)GlcNAc (lipid intermediate II). In Pelobacter propionicus (strain DSM 2379 / NBRC 103807 / OttBd1), this protein is UDP-N-acetylglucosamine--N-acetylmuramyl-(pentapeptide) pyrophosphoryl-undecaprenol N-acetylglucosamine transferase.